Here is a 437-residue protein sequence, read N- to C-terminus: Enolase-related protein 1 (437 aa).

His-160 and Glu-169 together coordinate substrate. Catalysis depends on Glu-212, which acts as the Proton donor. Positions 247, 296, and 321 each coordinate Mg(2+). Residues Glu-296 and Asp-321 each coordinate substrate. The active-site Proton acceptor is the Lys-346. Substrate contacts are provided by residues 373 to 376 (SHRS) and Lys-397.

This sequence belongs to the enolase family. Requires Mg(2+) as cofactor.

It catalyses the reaction (2R)-2-phosphoglycerate = phosphoenolpyruvate + H2O. Its pathway is carbohydrate degradation; glycolysis; pyruvate from D-glyceraldehyde 3-phosphate: step 4/5. The chain is Enolase-related protein 1 (ERR1) from Saccharomyces cerevisiae (strain ATCC 204508 / S288c) (Baker's yeast).